The sequence spans 1003 residues: MQMEFKEELCDMFSQIWDHIPDSQNFSEEIIVDEKIETVPMDVPAIVTHSTNVKLLEEMDVEIVHGLNPIKTLMFDGINDDDEQGNVGETRDEGYYTVEPIDEFVKTKTVQTLKSLRRKRGVTSQDGADDTNKHDNMHMMLQNGHTSIQSIEIEHDNAVPLSGVVIDNILNKYGQDKIFNLRKHNQYGTIYHISDVNMLCEELICNATQLNLPAAAVRRITFEFCRWLNETELLKLQCNQLEKFVSVDSTEWFKLPVSLYFDIPIMAKLLNIPYNLIIIREGVLFQLLSLSDTTFELQQVEHLDFHTNQILAIIIDDHVTVPLLPLKKLWNISDLAKNTDLPLDLCEDVSSYFKEEDKAINTYITPYIDPRIIFIAHRNPTDFMFMLPNIPYLTEVNSEIQIDKLSDVCEFEYNRYRKALFCVENLIEIHRWHSLVCFIHLLANGELTQSEQIFIAGISRTNEYYVELSPRDCLYNTIRASFSAYQAWFKDWRANRKIQKIQNNGNDSLHTVIEVKSQQECPNIEQNTSINVNNLFFNTIIKYLDHEQHRFNFSDFNQQIAHGHFEALHASVEFVSEIQITREFCDVIRSNLPLNLDIISLYSKSLSDYLKMDLVVYFPEYNELRLIDATKQFKIRFIEFNCTKKTITMFKYTTTFHASMQKSYNYQVSISNGMSNKEMFITCFKKESNLAVVKQFSLRNNHRYDGIIDQPNIIGKGRPNYPNTKEQSVDHHPKISQVKHASVEQGHLINNYDLMKFALCHQNYKRIFNNQLFSEAPISDESLFRLKLEVNTGQHILAFTHVSFYEDGKVKTTYVTFITVDIDCSHVHQALLPRCVFHIQKGKPILYAANKTFVTGGSERRIEVVFNHLKEYIKETGIRSRDIHTLNSKSDQLITTCLTPFILSSMSMRKALQDNGDLSFTSQCVRKCQMSFKDDRINLPCGTSVHESTVDLHKHACLLEYYRLGLYKEKNNMNRCGFSCVECHSRYPNQLCANVCRLICQGM.

This chain is Putative non-structural protein 4 (S4), found in Aedes pseudoscutellaris (Mosquito).